The following is a 90-amino-acid chain: UPF0237 protein NMA1909 (90 aa).

Residues V5–I83 form the ACT domain.

It belongs to the UPF0237 family.

This Neisseria meningitidis serogroup A / serotype 4A (strain DSM 15465 / Z2491) protein is UPF0237 protein NMA1909.